The sequence spans 190 residues: Protein GrpE (190 aa).

Positions 1–31 (MTEEQKKYEDAENLESKSENPEEASAEKSEN) are enriched in basic and acidic residues. The segment at 1–39 (MTEEQKKYEDAENLESKSENPEEASAEKSENGVEDLQAE) is disordered.

Belongs to the GrpE family. In terms of assembly, homodimer.

The protein localises to the cytoplasm. Functionally, participates actively in the response to hyperosmotic and heat shock by preventing the aggregation of stress-denatured proteins, in association with DnaK and GrpE. It is the nucleotide exchange factor for DnaK and may function as a thermosensor. Unfolded proteins bind initially to DnaJ; upon interaction with the DnaJ-bound protein, DnaK hydrolyzes its bound ATP, resulting in the formation of a stable complex. GrpE releases ADP from DnaK; ATP binding to DnaK triggers the release of the substrate protein, thus completing the reaction cycle. Several rounds of ATP-dependent interactions between DnaJ, DnaK and GrpE are required for fully efficient folding. The protein is Protein GrpE of Zymomonas mobilis subsp. mobilis (strain ATCC 31821 / ZM4 / CP4).